The chain runs to 588 residues: Phosphomethylpyrimidine synthase (588 aa).

Residues Asn-212, Met-241, Tyr-270, His-306, 326-328, 367-370, and Glu-406 contribute to the substrate site; these read SRG and DGLR. His-410 serves as a coordination point for Zn(2+). Position 433 (Tyr-433) interacts with substrate. His-474 is a Zn(2+) binding site. Positions 554, 557, and 562 each coordinate [4Fe-4S] cluster.

This sequence belongs to the ThiC family. Homodimer. It depends on [4Fe-4S] cluster as a cofactor.

The enzyme catalyses 5-amino-1-(5-phospho-beta-D-ribosyl)imidazole + S-adenosyl-L-methionine = 4-amino-2-methyl-5-(phosphooxymethyl)pyrimidine + CO + 5'-deoxyadenosine + formate + L-methionine + 3 H(+). It functions in the pathway cofactor biosynthesis; thiamine diphosphate biosynthesis. Functionally, catalyzes the synthesis of the hydroxymethylpyrimidine phosphate (HMP-P) moiety of thiamine from aminoimidazole ribotide (AIR) in a radical S-adenosyl-L-methionine (SAM)-dependent reaction. The polypeptide is Phosphomethylpyrimidine synthase (Bartonella quintana (strain Toulouse) (Rochalimaea quintana)).